A 486-amino-acid chain; its full sequence is Regulatory protein ViaA (486 aa).

It belongs to the ViaA family. As to quaternary structure, homodimer. Interacts with RavA.

The protein localises to the cytoplasm. Functionally, component of the RavA-ViaA chaperone complex, which may act on the membrane to optimize the function of some of the respiratory chains. ViaA stimulates the ATPase activity of RavA. The chain is Regulatory protein ViaA from Erwinia tasmaniensis (strain DSM 17950 / CFBP 7177 / CIP 109463 / NCPPB 4357 / Et1/99).